The sequence spans 294 residues: Tetraspanin-15 (294 aa).

At 1–23 (MPRGDSEQVRYCARFSYLWLKFS) the chain is on the cytoplasmic side. Residues 24–44 (LIIYSTVFWLIGGLVLSVGIY) form a helical membrane-spanning segment. At 45–62 (AEAERQKYKTLESAFLAP) the chain is on the extracellular side. Residues 63 to 83 (AIILILLGVVMFIVSFIGVLA) traverse the membrane as a helical segment. Residues 84–94 (SLRDNLCLLQS) are Cytoplasmic-facing. Residues 95 to 115 (FMYILGICLVMELIGGIVALI) form a helical membrane-spanning segment. Residues 116–235 (FRNQTIDFLN…WFMDNYTIMA (120 aa)) are Extracellular-facing. Asn-118 is a glycosylation site (N-linked (GlcNAc...) asparagine). 4 disulfides stabilise this stretch: Cys-154/Cys-219, Cys-155/Cys-185, Cys-171/Cys-179, and Cys-186/Cys-198. 2 N-linked (GlcNAc...) asparagine glycosylation sites follow: Asn-189 and Asn-230. A helical transmembrane segment spans residues 236–256 (GLLLGILLPQFLGVLLTLLYI). Topologically, residues 257-294 (TRVEDIILEHSVTDGLLGPGAKSRTDTAGTGCCLCYPD) are cytoplasmic.

This sequence belongs to the tetraspanin (TM4SF) family. In terms of assembly, interacts with ADAM10; the interaction influences ADAM10 substrate specificity, endocytosis and turnover. Palmitoylated.

The protein localises to the cell membrane. It is found in the late endosome membrane. Its function is as follows. Part of TspanC8 subgroup, composed of 6 members that interact with the transmembrane metalloprotease ADAM10. This interaction is required for ADAM10 exit from the endoplasmic reticulum and for enzymatic maturation and trafficking to the cell surface as well as substrate specificity. Different TspanC8/ADAM10 complexes have distinct substrates. Promotes ADAM10-mediated cleavage of CDH2. Negatively regulates ligand-induced Notch activity probably by regulating ADAM10 activity. The polypeptide is Tetraspanin-15 (Tspan15) (Mus musculus (Mouse)).